The primary structure comprises 143 residues: Large-conductance mechanosensitive channel (143 aa).

The next 3 helical transmembrane spans lie at 10–30 (FAIK…GAFG), 40–60 (IIMP…QKFI), and 86–106 (GNFL…FLMV).

Belongs to the MscL family. In terms of assembly, homopentamer.

The protein resides in the cell inner membrane. Its function is as follows. Channel that opens in response to stretch forces in the membrane lipid bilayer. May participate in the regulation of osmotic pressure changes within the cell. The chain is Large-conductance mechanosensitive channel from Acinetobacter baumannii (strain ATCC 17978 / DSM 105126 / CIP 53.77 / LMG 1025 / NCDC KC755 / 5377).